The sequence spans 378 residues: Circumsporozoite protein (378 aa).

Positions 1–22 (MKNFNLLVVSSILLVDLFPTNC) are cleaved as a signal peptide. The interval 50-288 (AQVRQSASRG…AGAGQGQNNE (239 aa)) is disordered. Residues 65–93 (NPKDEEGADKPKKKEEKKVEPKKPRENKL) show a composition bias toward basic and acidic residues. The tract at residues 81-89 (KKVEPKKPR) is required for the binding to heparan sulfate proteoglycans (HSPGs) on the surface of host hepatocytes. Positions 92 to 96 (KLKQP) are region I; contains the proteolytic cleavage site. Residues 96-203 (PPAGDGAPEG…RAGGQPAAGG (108 aa)) are compositionally biased toward low complexity. The stretch at 97–102 (PAGDGA) is one 1-1; truncated repeat. Positions 97–191 (PAGDGAPEGD…AAPAGDGAPA (95 aa)) are 11 X 9 AA tandem repeats of P-[AE]-G-D-G-A-P-A-[AG]. Repeat copies occupy residues 103–111 (PEGDGAPAA), 112–120 (PAGDGAPAA), 121–129 (PAGDGAPAA), 130–138 (PAGDGAPAA), 139–147 (PAGDGAPAA), 148–156 (PAGDGAPAA), 157–165 (PAGDGAPAA), 166–174 (PAGDGAPAA), 175–183 (PAGDGAPAA), 184–191 (PAGDGAPA), 193–208 (NRAGGQPAAGGNQAGG), 209–224 (NRAGGQPAAGGNQAGG), and 225–240 (NRAGGQPAAGGNQAGG). The tract at residues 193-268 (NRAGGQPAAG…GAQAGGANAG (76 aa)) is 6 X 16 AA approximate tandem repeats of N-R-A-G-G-Q-P-A-A-G-G-N-Q-A-G-G. Residues 228 to 251 (GGQPAAGGNQAGGQPAAGGNQAGA) are compositionally biased toward low complexity. A 2-4; approximate; truncated repeat occupies 241–251 (QPAAGGNQAGA). Residues 252-260 (QAGGNQAGA) form a 2-5; approximate; truncated repeat. 2 stretches are compositionally biased toward gly residues: residues 252–266 (QAGGNQAGAQAGGAN) and 274–283 (EAGGNAGAGQ). The stretch at 261–268 (QAGGANAG) is one 2-6; approximate; truncated repeat. In terms of domain architecture, TSP type-1 spans 304–356 (KIRSTLGVEWSPCSVTCGKGVRMRRKVSAANKKPEELDVNDLETEVCTMDKCA). Disulfide bonds link Cys-316/Cys-350 and Cys-320/Cys-355. The O-linked (Fuc) threonine glycan is linked to Thr-319. Residue Cys-355 is the site of GPI-anchor amidated cysteine attachment. Residues 356 to 378 (AGIFNVVSNSLRLVILLVLALFN) constitute a propeptide, removed in mature form.

This sequence belongs to the plasmodium circumsporozoite protein family. In terms of processing, during host cell invasion, proteolytically cleaved at the cell membrane in the region I by a papain-like cysteine protease of parasite origin. Cleavage is triggered by the sporozoite contact with highly sulfated heparan sulfate proteoglycans (HSPGs) present on the host hepatocyte cell surface. Cleavage exposes the TSP type-1 (TSR) domain and is required for productive invasion of host hepatocytes but not for adhesion to the host cell membrane. Cleavage is dispensable for sporozoite development in the oocyst, motility and for traversal of host and vector cells. Post-translationally, O-glycosylated; maybe by POFUT2.

The protein localises to the cell membrane. Its subcellular location is the cytoplasm. Its function is as follows. Essential sporozoite protein. In the mosquito vector, required for sporozoite development in the oocyst, migration through the vector hemolymph and entry into the vector salivary glands. In the vertebrate host, required for sporozoite migration through the host dermis and infection of host hepatocytes. Binds to highly sulfated heparan sulfate proteoglycans (HSPGs) on the surface of host hepatocytes. Functionally, in the vertebrate host, binds to highly sulfated heparan sulfate proteoglycans (HSPGs) on the surface of host hepatocytes and is required for sporozoite invasion of the host hepatocytes. In Plasmodium cynomolgi (strain Berok), this protein is Circumsporozoite protein.